The primary structure comprises 313 residues: Heterogeneous nuclear ribonucleoproteins C1/C2 (313 aa).

The residue at position 2 (alanine 2) is an N-acetylalanine. Glycyl lysine isopeptide (Lys-Gly) (interchain with G-Cter in SUMO2) cross-links involve residues lysine 8, lysine 50, lysine 89, and lysine 94. Positions 16–87 constitute an RRM domain; sequence SRVFIGNLNT…QVLDINLAAE (72 aa). Phosphoserine occurs at positions 113, 115, and 121. Disordered regions lie at residues 139–191 and 219–313; these read YPAR…KLKG and EKEQ…EDDS. Residues 155-161 carry the Nuclear localization signal motif; it reads PSKRQRV. A phosphoserine mark is found at serine 162 and serine 166. The span at 175 to 186 shows a compositional bias: low complexity; it reads SKSGQRGSSSKS. The residue at position 176 (lysine 176) is an N6-acetyllysine; alternate. A Glycyl lysine isopeptide (Lys-Gly) (interchain with G-Cter in SUMO2); alternate cross-link involves residue lysine 176. A coiled-coil region spans residues 191–226; it reads GDDLQAIKKELTQIKQKVDSLLESLEKIEKEQSKQA. Residue lysine 224 forms a Glycyl lysine isopeptide (Lys-Gly) (interchain with G-Cter in SUMO2) linkage. Phosphoserine is present on residues serine 229, serine 231, and serine 232. Lysine 237 participates in a covalent cross-link: Glycyl lysine isopeptide (Lys-Gly) (interchain with G-Cter in SUMO2). Lysine 240 is covalently cross-linked (Glycyl lysine isopeptide (Lys-Gly) (interchain with G-Cter in SUMO2); alternate). A Glycyl lysine isopeptide (Lys-Gly) (interchain with G-Cter in SUMO1); alternate cross-link involves residue lysine 240. Serine 241, serine 246, serine 247, and serine 249 each carry phosphoserine. A compositionally biased stretch (basic and acidic residues) spans 250–261; sequence VKKDETNVKMES. Glycyl lysine isopeptide (Lys-Gly) (interchain with G-Cter in SUMO2) cross-links involve residues lysine 251 and lysine 252. A Glycyl lysine isopeptide (Lys-Gly) (interchain with G-Cter in SUMO2); alternate cross-link involves residue lysine 258. A Glycyl lysine isopeptide (Lys-Gly) (interchain with G-Cter in SUMO); alternate cross-link involves residue lysine 258. 2 positions are modified to phosphoserine: serine 261 and serine 268. Over residues 263-284 the composition is skewed to acidic residues; the sequence is AGADDSAEEGDLLDDDDNEDRG. Over residues 285-294 the composition is skewed to basic and acidic residues; sequence DDQLELKDDE. The span at 295–313 shows a compositional bias: acidic residues; the sequence is KEPEEGEDDRDSANGEDDS. Residues serine 306 and serine 313 each carry the phosphoserine modification.

Belongs to the RRM HNRPC family. RALY subfamily. In terms of assembly, tetramer composed of 3 copies of isoform C1 and 1 copy of isoform C2. Assembly of 3 tetramers with bound pre-mRNA gives rise to a 19S complex that interacts with HNRNPA2B1 tetramers. Component of the 40S hnRNP particle. Identified in the spliceosome C complex. Interacts with IGF2BP1. Interacts with DHX9; this interaction is direct, enhanced probably by their concomitant binding to RNA and mediates the attachment to actin filaments. Interacts with PPIA/CYPA. Phosphorylated on Ser-268 and Ser-306 in resting cells. In terms of processing, sumoylated. Sumoylation reduces affinity for mRNA. Post-translationally, ubiquitinated and degraded after nucleo-cytoplasmic transport by YWHAE.

Its subcellular location is the nucleus. Binds pre-mRNA and nucleates the assembly of 40S hnRNP particles. Interacts with poly-U tracts in the 3'-UTR or 5'-UTR of mRNA and modulates the stability and the level of translation of bound mRNA molecules. Single HNRNPC tetramers bind 230-240 nucleotides. Trimers of HNRNPC tetramers bind 700 nucleotides. May play a role in the early steps of spliceosome assembly and pre-mRNA splicing. N6-methyladenosine (m6A) has been shown to alter the local structure in mRNAs and long non-coding RNAs (lncRNAs) via a mechanism named 'm(6)A-switch', facilitating binding of HNRNPC, leading to regulation of mRNA splicing. This is Heterogeneous nuclear ribonucleoproteins C1/C2 (Hnrnpc) from Mus musculus (Mouse).